The chain runs to 124 residues: uncharacterized protein (124 aa).

Disordered stretches follow at residues 1-26 (MRRQEALVVTAGTASEASRDGEQPRP) and 100-124 (IPGQQSRNCSLPQTKYYSRHGGLRR). The segment covering 102 to 115 (GQQSRNCSLPQTKY) has biased composition (polar residues).

The protein localises to the cytoplasm. The protein resides in the cytoskeleton. It localises to the cilium basal body. This is an uncharacterized protein from Rattus norvegicus (Rat).